A 265-amino-acid chain; its full sequence is MPRLKLTLEYEGTRYVGWQVQPNGPSIQSVLESGLERLLGARVSVASAGRTDAGVHASGQVACFDSPRVLPMKAYVMGLNGLLPPDVAVVDAVEVAEDFDPRRWSRGKRYRYRVSNRRTRSPLRRMTHWEVFAPLDVEAMRQAAAHLLGRHDFSAFRAADCQAKHAVREIRSLAVEGTSGDAVSFVVEGTAFLKHMVRNLAGTLVEVGKGRRPASWVAEVLASQERKRAGPTAPPQGLVLEEVFYRDGPPARTPGGTTDAEEDEG.

Residue Asp-52 is the Nucleophile of the active site. Substrate is bound at residue Tyr-110. Positions 244–265 (FYRDGPPARTPGGTTDAEEDEG) are disordered.

Belongs to the tRNA pseudouridine synthase TruA family. Homodimer.

The catalysed reaction is uridine(38/39/40) in tRNA = pseudouridine(38/39/40) in tRNA. Its function is as follows. Formation of pseudouridine at positions 38, 39 and 40 in the anticodon stem and loop of transfer RNAs. In Myxococcus xanthus, this protein is tRNA pseudouridine synthase A.